The sequence spans 508 residues: Amphoterin-induced protein 3 (508 aa).

An N-terminal signal peptide occupies residues 1–19 (MAWLVLSGILLCMLGAGLG). Residues 20-383 (TSDLEDVLPP…ARPEPETFNT (364 aa)) lie on the Extracellular side of the membrane. In terms of domain architecture, LRRNT spans 25 to 61 (DVLPPAPHNCPDICICAADVLSCAGRGLQDLPVALPT). 2 disulfide bridges follow: cysteine 34–cysteine 40 and cysteine 38–cysteine 47. LRR repeat units follow at residues 62 to 83 (TAAE…WLAP), 86 to 107 (RLRA…AFTN), 110 to 133 (GLRT…DGLE), 134 to 155 (ELEK…AFQG), 158 to 178 (MLSH…NHLH), and 184 to 207 (RLRT…AALP). Asparagine 107 carries an N-linked (GlcNAc...) asparagine glycan. Asparagine 142 is a glycosylation site (N-linked (GlcNAc...) asparagine). Residues 219–275 (NPLPCDCSLYHLLRRWHQRGLSALHDFEREYTCLVFKVSESRVRFFEHSRVFKNCSV) enclose the LRRCT domain. Intrachain disulfides connect cysteine 223–cysteine 251, cysteine 225–cysteine 273, and cysteine 300–cysteine 352. N-linked (GlcNAc...) asparagine glycans are attached at residues asparagine 272, asparagine 301, asparagine 362, and asparagine 368. Residues 279 to 370 (PGLELPEEQL…HNQTLEYNVS (92 aa)) enclose the Ig-like C2-type domain. The helical transmembrane segment at 384–404 (GFTTLLGCIVGLVLVLLYLFA) threads the bilayer. Residues 405 to 508 (PPCRGCCHCC…STGSEGLVMS (104 aa)) lie on the Cytoplasmic side of the membrane.

It belongs to the immunoglobulin superfamily. AMIGO family. As to quaternary structure, binds AMIGO1 or AMIGO2. Ubiquitous.

It localises to the membrane. Its function is as follows. May mediate heterophilic cell-cell interaction. May contribute to signal transduction through its intracellular domain. This is Amphoterin-induced protein 3 from Mus musculus (Mouse).